Reading from the N-terminus, the 1691-residue chain is Non-structural polyprotein pORF1 (1691 aa).

An Alphavirus-like MT domain is found at 56-240 (VFRPEVFWNH…HDVATLRTWI (185 aa)). The interval 60–240 (EVFWNHPIQR…HDVATLRTWI (181 aa)) is methyltransferase. The segment at 241–439 (RTTKVVGEHP…FYAQCRRWLS (199 aa)) is Y-domain. Residues C434 and C481 are joined by a disulfide bond. Positions 442-509 (FHLDPRTLVF…EAYEGSDVDT (68 aa)) are putative protease. Positions 510 to 691 (AEPATLDITG…FSPGHEWRSA (182 aa)) are zinc-binding. Positions 671, 673, and 686 each coordinate Zn(2+). Residues 710–776 (DTPLTVGLIS…GPNPNGVPQR (67 aa)) are hinge. Residues 722 to 778 (LDAAPHSGGPPATATGPAVGSSDSPDPDPLPDVTDGSRPSGARPAGPNPNGVPQRRL) form a disordered region. Residues 773–919 (VPQRRLLHTY…LYLTELAARW (147 aa)) form the Macro domain. Positions 783–940 (PDGAKIYVGS…NITEDTARAA (158 aa)) are X-domain. One can recognise a (+)RNA virus helicase ATP-binding domain in the interval 932–1080 (ITEDTARAAN…RPELVPTSWW (149 aa)). Residues 958–1202 (GCKVEPGVVR…ISDAIVNNFF (245 aa)) are NTPase/helicase. ATP is bound at residue 973–980 (GVPGSGKS). The (+)RNA virus helicase C-terminal domain occupies 1081–1214 (HVTHRCPADV…GGEVGHQRPS (134 aa)). An RNA-directed RNA polymerase region spans residues 1205 to 1691 (GGEVGHQRPS…LTHSIMHRSE (487 aa)). The 112-residue stretch at 1452-1563 (AMVFENDFSE…LCSEYRQSPG (112 aa)) folds into the RdRp catalytic domain.

It belongs to the hepevirus non-structural polyprotein family. In terms of assembly, the protease domain interacts with host EIF2AK4 (via C-terminus); this interaction inhibits dimerization of EIF2AK4 and prevents EIF2AK4-mediated phosphorylation of host EIF2A. Requires Mg(2+) as cofactor. In terms of processing, ORF1 polyprotein does not seem to be processed into distinct enzymatic domains by a viral protease belonging to ORF1, but could be processed by a host serine protease like thrombin.

Its subcellular location is the host cytoplasm. The protein resides in the host perinuclear region. It catalyses the reaction RNA(n) + a ribonucleoside 5'-triphosphate = RNA(n+1) + diphosphate. The catalysed reaction is GTP + S-adenosyl-L-methionine = N(7)-methyl-GTP + S-adenosyl-L-homocysteine. With respect to regulation, putative protease: Inhibited by chymostatin. Its function is as follows. Methyltransferase: Displays a capping enzyme activity. This function is necessary since all viral RNAs are synthesized in the cytoplasm, and host capping enzymes are restricted to the nucleus. The enzymatic reaction involves a covalent link between 7-methyl-GMP and the methyltransferase, whereas eukaryotic capping enzymes form a covalent complex only with GMP. Methyltransferase catalyzes transfer of a methyl group from S-adenosylmethionine to GTP and GDP to yield m(7)GTP or m(7)GDP. GDP is a better substrate than GTP. This enzyme also displays guanylyltransferase activity to form a covalent complex, methyltransferase-m(7)GMP, from which 7-methyl-GMP is transferred to the mRNA to create the cap structure. In terms of biological role, Y-domain: Indispensable for virus replication. Putative protease: The putative protease domain although necessary for replication of the virus may not be a protease but rather a structural Zn(2+)-binding domain. Inhibits induction of IFN-beta by MDA5 and RIG-I pathways and down-regulates the expression of MDA5. Functionally, NTPase/helicase: Multi-functional protein that exhibits NTPase and RNA unwinding activities. Hydrolyzes all NTPs efficiently and unwinds RNA duplexes containing 5' overhangs. Possesses a sequence independent RNA-5'-triphosphatase (RTPase) activity suggestive of its role in forming viral cap structure. Also participates in viral genome replication, RNA translocation and genome packaging/unpackaging. Its function is as follows. RNA-directed RNA polymerase: Plays an essential role in the virus replication. Binds to the 3'-end of the genomic RNA to initiate viral replication. In Bandicota bengalensis (lesser bandicoot rat), this protein is Non-structural polyprotein pORF1.